The primary structure comprises 261 residues: Ribosomal RNA small subunit methyltransferase J (261 aa).

Residues 109–110 (RD), 125–126 (ER), and D179 contribute to the S-adenosyl-L-methionine site.

This sequence belongs to the methyltransferase superfamily. RsmJ family.

It localises to the cytoplasm. It catalyses the reaction guanosine(1516) in 16S rRNA + S-adenosyl-L-methionine = N(2)-methylguanosine(1516) in 16S rRNA + S-adenosyl-L-homocysteine + H(+). In terms of biological role, specifically methylates the guanosine in position 1516 of 16S rRNA. This Pseudomonas aeruginosa (strain LESB58) protein is Ribosomal RNA small subunit methyltransferase J.